A 315-amino-acid chain; its full sequence is Holliday junction branch migration complex subunit RuvB (315 aa).

The interval 1–168 (MAKKQEIRPK…FGLIGQISNY (168 aa)) is large ATPase domain (RuvB-L). ATP is bound by residues Ile-7, Arg-8, Gly-49, Lys-52, Thr-53, Ser-54, 115-117 (EDF), Arg-158, Tyr-168, and Arg-205. Thr-53 is a binding site for Mg(2+). Residues 169–239 (QVEDIEKIIK…LVNKTLKQLG (71 aa)) are small ATPAse domain (RuvB-S). Residues 242-315 (ENGLNESQVK…QKGISYLERI (74 aa)) form a head domain (RuvB-H) region. Positions 297 and 302 each coordinate DNA.

Belongs to the RuvB family. In terms of assembly, homohexamer. Forms an RuvA(8)-RuvB(12)-Holliday junction (HJ) complex. HJ DNA is sandwiched between 2 RuvA tetramers; dsDNA enters through RuvA and exits via RuvB. An RuvB hexamer assembles on each DNA strand where it exits the tetramer. Each RuvB hexamer is contacted by two RuvA subunits (via domain III) on 2 adjacent RuvB subunits; this complex drives branch migration. In the full resolvosome a probable DNA-RuvA(4)-RuvB(12)-RuvC(2) complex forms which resolves the HJ.

It localises to the cytoplasm. The catalysed reaction is ATP + H2O = ADP + phosphate + H(+). The RuvA-RuvB-RuvC complex processes Holliday junction (HJ) DNA during genetic recombination and DNA repair, while the RuvA-RuvB complex plays an important role in the rescue of blocked DNA replication forks via replication fork reversal (RFR). RuvA specifically binds to HJ cruciform DNA, conferring on it an open structure. The RuvB hexamer acts as an ATP-dependent pump, pulling dsDNA into and through the RuvAB complex. RuvB forms 2 homohexamers on either side of HJ DNA bound by 1 or 2 RuvA tetramers; 4 subunits per hexamer contact DNA at a time. Coordinated motions by a converter formed by DNA-disengaged RuvB subunits stimulates ATP hydrolysis and nucleotide exchange. Immobilization of the converter enables RuvB to convert the ATP-contained energy into a lever motion, pulling 2 nucleotides of DNA out of the RuvA tetramer per ATP hydrolyzed, thus driving DNA branch migration. The RuvB motors rotate together with the DNA substrate, which together with the progressing nucleotide cycle form the mechanistic basis for DNA recombination by continuous HJ branch migration. Branch migration allows RuvC to scan DNA until it finds its consensus sequence, where it cleaves and resolves cruciform DNA. The chain is Holliday junction branch migration complex subunit RuvB from Mycoplasmopsis pulmonis (strain UAB CTIP) (Mycoplasma pulmonis).